Consider the following 95-residue polypeptide: F(1)-ATPase inhibitor IF(1), mitochondrial (95 aa).

The transit peptide at 1-25 (MLRTTVSKLARPTVSRAFATTSRAL) directs the protein to the mitochondrion. 2 disordered regions span residues 20–48 (TTSR…REKA) and 76–95 (LKTL…GERN).

Belongs to the ATPase inhibitor family. In terms of assembly, associates with the mitochondrial small ribosomal subunit (mt-SSU). IF(1) coiled-coil forms a helical bundle with the C-terminal extension of uS17m and also binds to mS27 in the mtSSU tail. Since the C-terminal extension of uS17m stabilizing the IF(1) on the mt-SSU is specific to N.crassa, IF(1) binding might also be specific.

Its subcellular location is the mitochondrion. Functionally, endogenous F(1)F(0)-ATPase inhibitor limiting ATP depletion when the mitochondrial membrane potential falls below a threshold and the F(1)F(0)-ATP synthase starts hydrolyzing ATP to pump protons out of the mitochondrial matrix. Required to avoid the consumption of cellular ATP when the F(1)F(0)-ATP synthase enzyme acts as an ATP hydrolase. Functions through inserting its N-terminal part into the catalytically active F1-ATPase, thereby blocking its rotational movement and subsequently the ATP hydrolase activity. The chain is F(1)-ATPase inhibitor IF(1), mitochondrial (inh1) from Neurospora crassa (strain ATCC 24698 / 74-OR23-1A / CBS 708.71 / DSM 1257 / FGSC 987).